Consider the following 348-residue polypeptide: MNGTEGPNFYVPFSNKTGVVRSPFEFPQYYLAEPWQFSMLAAYMFLLIVLGFPINFLTLYVTVQHKKLRTPLNYILLNLAVADLFMVFGGFTTTLYTSLHGYFVFGPTGCNLEGFFATLGGEIALWSLVVLAIERYVVVCKPMSNFRFGENHAIMGVGFTWVMALACAAPPLVGWSRYIPEGMQCSCGIDYYTLKPEVNNESFVIYMFVVHFTIPMIVIFFCYGQLVFTVKEAAAQQQESATTQKAEKEVTRMVIIMVIAFLICWVPYASVAFYIFTHQGSNFGPIFMTLPAFFAKAASIYNPVIYIMMNKQFRTCMITTLCCGKNPLGDDEVSASASKTETSQVAPA.

Residue Met1 is modified to N-acetylmethionine. The Extracellular segment spans residues 1 to 36 (MNGTEGPNFYVPFSNKTGVVRSPFEFPQYYLAEPWQ). N-linked (GlcNAc...) asparagine glycosylation is found at Asn2 and Asn15. The chain crosses the membrane as a helical span at residues 37-61 (FSMLAAYMFLLIVLGFPINFLTLYV). Over 62–73 (TVQHKKLRTPLN) the chain is Cytoplasmic. Residues 74–96 (YILLNLAVADLFMVFGGFTTTLY) traverse the membrane as a helical segment. Over 97-110 (TSLHGYFVFGPTGC) the chain is Extracellular. Cys110 and Cys187 are oxidised to a cystine. Residues 111 to 133 (NLEGFFATLGGEIALWSLVVLAI) form a helical membrane-spanning segment. A 'Ionic lock' involved in activated form stabilization motif is present at residues 134-136 (ERY). Topologically, residues 134-152 (ERYVVVCKPMSNFRFGENH) are cytoplasmic. A helical transmembrane segment spans residues 153–173 (AIMGVGFTWVMALACAAPPLV). Residues 174–202 (GWSRYIPEGMQCSCGIDYYTLKPEVNNES) lie on the Extracellular side of the membrane. Residue Glu201 participates in Zn(2+) binding. A helical membrane pass occupies residues 203-224 (FVIYMFVVHFTIPMIVIFFCYG). Residues 225 to 252 (QLVFTVKEAAAQQQESATTQKAEKEVTR) are Cytoplasmic-facing. Residues 253–274 (MVIIMVIAFLICWVPYASVAFY) form a helical membrane-spanning segment. Over 275-286 (IFTHQGSNFGPI) the chain is Extracellular. A Zn(2+)-binding site is contributed by Gln279. A helical membrane pass occupies residues 287 to 308 (FMTLPAFFAKAASIYNPVIYIM). Lys296 bears the N6-(retinylidene)lysine mark. Topologically, residues 309-348 (MNKQFRTCMITTLCCGKNPLGDDEVSASASKTETSQVAPA) are cytoplasmic. Residues Cys322 and Cys323 are each lipidated (S-palmitoyl cysteine). The interaction with SAG stretch occupies residues 330 to 348 (DDEVSASASKTETSQVAPA). Ser334 and Ser338 each carry phosphoserine. Residues Thr340 and Thr342 each carry the phosphothreonine modification. A Phosphoserine modification is found at Ser343.

Belongs to the G-protein coupled receptor 1 family. Opsin subfamily. As to quaternary structure, homodimer. May form a complex composed of RHO, GRK1 and RCVRN in a Ca(2+)-dependent manner; RCVRN prevents the interaction between GRK1 and RHO. Interacts with GRK1. Interacts (phosphorylated form) with SAG. Interacts with GNAT1. Interacts with GNAT3. SAG and G-proteins compete for a common binding site. Interacts with PRCD; the interaction promotes PRCD stability. Forms a complex with ASAP1 and ARF4. Forms a complex with ASAP1, RAB11A, Rabin8/RAB3IP, ARF4 and RAB11FIP3; the complex regulates Golgi-to-cilia rhodopsin/RHO transport in photoreceptors. In terms of processing, phosphorylated on some or all of the serine and threonine residues present in the C-terminal region. Contains one covalently linked retinal chromophore. Upon light absorption, the covalently bound 11-cis-retinal is converted to all-trans-retinal. After hydrolysis of the Schiff base and release of the covalently bound all-trans-retinal, active rhodopsin is regenerated by binding of a fresh molecule of 11-cis-retinal.

It is found in the membrane. Its subcellular location is the cell projection. It localises to the cilium. The protein resides in the photoreceptor outer segment. In terms of biological role, photoreceptor required for image-forming vision at low light intensity. Required for photoreceptor cell viability after birth. Light-induced isomerization of 11-cis to all-trans retinal triggers a conformational change that activates signaling via G-proteins. Subsequent receptor phosphorylation mediates displacement of the bound G-protein alpha subunit by the arrestin SAG and terminates signaling. The chain is Rhodopsin (RHO) from Phoca vitulina (Harbor seal).